The following is a 119-amino-acid chain: MARVKGGVVSRKRRKRILKLAKGYYGAKHILFRTAKEQVMNSYYYAYRDRRQKKRDFRKLWITRINAAARMNGLSYSQLMHGLKLAEIEVNRKMLADLAVNDAVAFTALADAAKAKLGK.

The protein belongs to the bacterial ribosomal protein bL20 family.

Binds directly to 23S ribosomal RNA and is necessary for the in vitro assembly process of the 50S ribosomal subunit. It is not involved in the protein synthesizing functions of that subunit. The sequence is that of Large ribosomal subunit protein bL20 from Streptococcus pneumoniae serotype 2 (strain D39 / NCTC 7466).